The sequence spans 113 residues: uncharacterized protein (113 aa).

This is an uncharacterized protein from Schizosaccharomyces pombe (strain 972 / ATCC 24843) (Fission yeast).